A 653-amino-acid chain; its full sequence is Threonine--tRNA ligase (653 aa).

One can recognise a TGS domain in the interval 1–61 (MIKITFPDGN…NEDAEVKLFK (61 aa)). The tract at residues 243-542 (DHRKIGKELE…LIEHTAGKFP (300 aa)) is catalytic. Cysteine 338, histidine 389, and histidine 519 together coordinate Zn(2+).

Belongs to the class-II aminoacyl-tRNA synthetase family. Homodimer. Requires Zn(2+) as cofactor.

Its subcellular location is the cytoplasm. The catalysed reaction is tRNA(Thr) + L-threonine + ATP = L-threonyl-tRNA(Thr) + AMP + diphosphate + H(+). Its function is as follows. Catalyzes the attachment of threonine to tRNA(Thr) in a two-step reaction: L-threonine is first activated by ATP to form Thr-AMP and then transferred to the acceptor end of tRNA(Thr). Also edits incorrectly charged L-seryl-tRNA(Thr). This is Threonine--tRNA ligase from Porphyromonas gingivalis (strain ATCC 33277 / DSM 20709 / CIP 103683 / JCM 12257 / NCTC 11834 / 2561).